A 409-amino-acid polypeptide reads, in one-letter code: Mitochondrial import inner membrane translocase subunit TIM50-B (409 aa).

Residues 1–42 (MSLIAIERVLCGWPKICRKLIVTSRSLTSGLRRALVKQPRKG) constitute a mitochondrion transit peptide. The Mitochondrial matrix segment spans residues 43–127 (GDVGKPGMEL…ELERAFRRMK (85 aa)). A disordered region spans residues 93 to 114 (PQTSEESNDEESRERRKLEEEE). A compositionally biased stretch (basic and acidic residues) spans 102 to 111 (EESRERRKLE). A helical membrane pass occupies residues 128–148 (LGFGLFGIGSMLFSFWAIYFY). The Mitochondrial intermembrane portion of the chain corresponds to 149–409 (GRPSLDEHGN…KNWTRGFINH (261 aa)). An FCP1 homology domain is found at 205-348 (YVQPPYTLVL…FELTSFLSVL (144 aa)).

This sequence belongs to the TIM50 family. Component of the TIM23 complex at least composed of Tim23, Tim17 (Tim17a1, Tim17a2 or Tim17b1) and a Tim50. Exclusively expressed in the testis.

Its subcellular location is the mitochondrion inner membrane. Its function is as follows. Essential component of the TIM23 complex, a complex that mediates the translocation of transit peptide-containing proteins across the mitochondrial inner membrane. This chain is Mitochondrial import inner membrane translocase subunit TIM50-B (ttm2), found in Drosophila melanogaster (Fruit fly).